Here is a 451-residue protein sequence, read N- to C-terminus: Chromosomal replication initiator protein DnaA (451 aa).

The interval 1–77 (MTENEQIFWN…EVYNAQISVD (77 aa)) is domain I, interacts with DnaA modulators. Residues 77 to 110 (DYVFEEDLMIEQNQTKINQKPKQQALNSLPTVTS) are domain II. A domain III, AAA+ region region spans residues 111–329 (DLNSKYSFEN…GALKDISLGA (219 aa)). ATP is bound by residues Gly155, Gly157, Lys158, and Thr159. The domain IV, binds dsDNA stretch occupies residues 330-451 (NFKQIDTITV…EIETIKNKIK (122 aa)).

It belongs to the DnaA family. Oligomerizes as a right-handed, spiral filament on DNA at oriC.

It localises to the cytoplasm. Its function is as follows. Plays an essential role in the initiation and regulation of chromosomal replication. ATP-DnaA binds to the origin of replication (oriC) to initiate formation of the DNA replication initiation complex once per cell cycle. Binds the DnaA box (a 9 base pair repeat at the origin) and separates the double-stranded (ds)DNA. Forms a right-handed helical filament on oriC DNA; dsDNA binds to the exterior of the filament while single-stranded (ss)DNA is stabiized in the filament's interior. The ATP-DnaA-oriC complex binds and stabilizes one strand of the AT-rich DNA unwinding element (DUE), permitting loading of DNA polymerase. After initiation quickly degrades to an ADP-DnaA complex that is not apt for DNA replication. Binds acidic phospholipids. In Streptococcus pyogenes serotype M49 (strain NZ131), this protein is Chromosomal replication initiator protein DnaA.